A 281-amino-acid polypeptide reads, in one-letter code: Small ribosomal subunit protein uS2 (281 aa).

Residues 233 to 281 (NKAEGEAAEQPMAAWEKELLTNEAPAEASAEAAAPAAAEGETAEAPKAE) form a disordered region. The segment covering 255 to 275 (EAPAEASAEAAAPAAAEGETA) has biased composition (low complexity).

The protein belongs to the universal ribosomal protein uS2 family.

This is Small ribosomal subunit protein uS2 from Bifidobacterium longum (strain DJO10A).